The sequence spans 397 residues: Phosphoglycerate kinase (397 aa).

Substrate-binding positions include 26–28, arginine 42, 65–68, arginine 119, and arginine 152; these read DLN and HLGR. ATP contacts are provided by residues lysine 203, glutamate 325, and 351 to 354; that span reads GGDT.

The protein belongs to the phosphoglycerate kinase family. In terms of assembly, monomer.

The protein resides in the cytoplasm. The enzyme catalyses (2R)-3-phosphoglycerate + ATP = (2R)-3-phospho-glyceroyl phosphate + ADP. Its pathway is carbohydrate degradation; glycolysis; pyruvate from D-glyceraldehyde 3-phosphate: step 2/5. The protein is Phosphoglycerate kinase of Bordetella pertussis (strain Tohama I / ATCC BAA-589 / NCTC 13251).